The chain runs to 292 residues: RWD domain-containing protein 2A (292 aa).

The RWD domain maps to 14-134 (LEMEMLFSMF…QWLQDNSASY (121 aa)).

The sequence is that of RWD domain-containing protein 2A (RWDD2A) from Macaca fascicularis (Crab-eating macaque).